The chain runs to 86 residues: Small ribosomal subunit protein bS18 (86 aa).

This sequence belongs to the bacterial ribosomal protein bS18 family. In terms of assembly, part of the 30S ribosomal subunit. Forms a tight heterodimer with protein bS6.

Functionally, binds as a heterodimer with protein bS6 to the central domain of the 16S rRNA, where it helps stabilize the platform of the 30S subunit. In Campylobacter fetus subsp. fetus (strain 82-40), this protein is Small ribosomal subunit protein bS18.